The primary structure comprises 693 residues: FAST kinase domain-containing protein 2, mitochondrial (693 aa).

2 positions are modified to phosphoserine: Ser110 and Ser124. Residues 618-675 (VAVLCVSRSAYCLGSSHPRGFLAMKMRHLNAMGFRVILVNNWEMDKLEMEDAVTFLKT) enclose the RAP domain. At Ser692 the chain carries Phosphoserine.

The protein belongs to the FAST kinase family. As to quaternary structure, monomer. Found in a complex with GRSF1, DDX28, DHX30 and FASTKD5. Associates with the 16S mitochondrial rRNA (16S mt-rRNA). Forms a regulatory protein-RNA complex, consisting of RCC1L, NGRN, RPUSD3, RPUSD4, TRUB2, FASTKD2 and 16S mt-rRNA.

The protein localises to the mitochondrion matrix. It is found in the mitochondrion nucleoid. Plays an important role in assembly of the mitochondrial large ribosomal subunit. As a component of a functional protein-RNA module, consisting of RCC1L, NGRN, RPUSD3, RPUSD4, TRUB2, FASTKD2 and 16S mitochondrial ribosomal RNA (16S mt-rRNA), controls 16S mt-rRNA abundance and is required for intra-mitochondrial translation. May play a role in mitochondrial apoptosis. The chain is FAST kinase domain-containing protein 2, mitochondrial (FASTKD2) from Pongo abelii (Sumatran orangutan).